Reading from the N-terminus, the 542-residue chain is Chaperonin GroEL (542 aa).

Residues 29 to 32 (TIGP), 86 to 90 (DGTTT), G413, 477 to 479 (NAA), and D493 each bind ATP.

It belongs to the chaperonin (HSP60) family. In terms of assembly, forms a cylinder of 14 subunits composed of two heptameric rings stacked back-to-back. Interacts with the co-chaperonin GroES.

The protein localises to the cytoplasm. It catalyses the reaction ATP + H2O + a folded polypeptide = ADP + phosphate + an unfolded polypeptide.. Functionally, together with its co-chaperonin GroES, plays an essential role in assisting protein folding. The GroEL-GroES system forms a nano-cage that allows encapsulation of the non-native substrate proteins and provides a physical environment optimized to promote and accelerate protein folding. The chain is Chaperonin GroEL from Lactobacillus acidophilus (strain ATCC 700396 / NCK56 / N2 / NCFM).